Consider the following 298-residue polypeptide: Probable alpha-L-glutamate ligase (298 aa).

The region spanning 104-287 (MQLLSRHGIG…VAGKIIEFLE (184 aa)) is the ATP-grasp domain. ATP is bound by residues Lys-141, 178-179 (EY), Asp-187, and 211-213 (RSN). Mg(2+) is bound by residues Asp-248, Glu-260, and Asn-262. 3 residues coordinate Mn(2+): Asp-248, Glu-260, and Asn-262.

It belongs to the RimK family. Mg(2+) serves as cofactor. It depends on Mn(2+) as a cofactor.

The sequence is that of Probable alpha-L-glutamate ligase from Aeromonas salmonicida (strain A449).